Reading from the N-terminus, the 425-residue chain is Mothers against decapentaplegic homolog 3 (425 aa).

Ser-2 carries the N-acetylserine modification. Phosphothreonine; by CDK2 and CDK4 is present on Thr-8. The 127-residue stretch at 10-136 folds into the MH1 domain; the sequence is PIVKRLLGWK…YQRVETPVLP (127 aa). A Glycyl lysine isopeptide (Lys-Gly) (interchain with G-Cter in ubiquitin) cross-link involves residue Lys-33. Residue Cys-64 coordinates Zn(2+). Residue Lys-81 forms a Glycyl lysine isopeptide (Lys-Gly) (interchain with G-Cter in ubiquitin) linkage. Cys-109, Cys-121, and His-126 together coordinate Zn(2+). The segment at 137 to 231 is linker; that stretch reads PVLVPRHTEI…QPVTYCEPAF (95 aa). Over residues 165–177 the composition is skewed to polar residues; sequence NFPAGIEPQSNIP. A disordered region spans residues 165-208; sequence NFPAGIEPQSNIPETPPPGYLSEDGETSDHQMNHSMDAGSPNLS. Thr-179 is subject to Phosphothreonine; by CDK2, CDK4 and MAPK. Residue Ser-204 is modified to Phosphoserine; by GSK3 and MAPK. Phosphoserine; by MAPK is present on Ser-208. A Phosphoserine; by CDK2 and CDK4 modification is found at Ser-213. The 194-residue stretch at 232–425 folds into the MH2 domain; sequence WCSISYYELN…SPSIRCSSVS (194 aa). The interval 271 to 324 is sufficient for interaction with XPO4; it reads LGLLSNVNRNAAVELTRRHIGRGVRLYYIGGEVFAECLSDSAIFVQSPNCNQRY. Lys-378 carries the post-translational modification N6-acetyllysine. Ser-416 bears the Phosphoserine mark. Residue Ser-418 is modified to Phosphoserine; by CK1. Phosphoserine; by TGFBR1 occurs at positions 422, 423, and 425.

This sequence belongs to the dwarfin/SMAD family. As to quaternary structure, monomer; in the absence of TGF-beta. Homooligomer; in the presence of TGF-beta. Heterotrimer; forms a heterotrimer in the presence of TGF-beta consisting of two molecules of C-terminally phosphorylated SMAD2 or SMAD3 and one of SMAD4 to form the transcriptionally active SMAD2/SMAD3-SMAD4 complex. Part of a complex consisting of MAGI2/ARIP1, ACVR2A, ACVR1B and SMAD3. Forms a complex with SMAD2 and TRIM33 upon addition of TGF-beta. Found in a complex composed of SMAD3, RAN and XPO4; within the complex interacts directly with XPO4. Component of the multimeric complex SMAD3/SMAD4/JUN/FOS which forms at the AP1 promoter site; required for synergistic transcriptional activity in response to TGF-beta. Part of a ternary complex composed of SMAD3, ITCH/AIP4 and NEDD9/HEF1; within the complex NEDD9/HEF1 interacts (via N-terminus) with ITCH/AIP4; the complex mediates ubiquitination and proteasomal degradation of NEDD9/HEF1. Interacts with NEDD9; the interaction promotes NEDD9 ubiquitination and proteasomal degradation. Interacts (via an N-terminal domain) with JUN (via its basic DNA binding and leucine zipper domains); this interaction is essential for DNA binding and cooperative transcriptional activity in response to TGF-beta. Identified in a complex that contains at least ZNF451, SMAD2, SMAD3 and SMAD4. Interacts with PPM1A; the interaction dephosphorylates SMAD3 in the C-terminal SXS motif leading to disruption of the SMAD2/3-SMAD4 complex, nuclear export and termination of TGF-beta signaling. Interacts (via MH2 domain) with ZMIZ1 (via SP-RING-type domain); in the TGF-beta signaling pathway increases the activity of the SMAD3/SMAD4 transcriptional complex. Interacts (when phosphorylated) with RNF111; RNF111 acts as an enhancer of the transcriptional responses by mediating ubiquitination and degradation of SMAD3 inhibitors. Interacts (dephosphorylated form via the MH1 and MH2 domains) with RANBP3 (via its C-terminal R domain); the interaction results in the export of dephosphorylated SMAD3 out of the nucleus and termination of the TGF-beta signaling. Interacts (via MH2 domain) with LEMD3; the interaction represses SMAD3 transcriptional activity through preventing the formation of the heteromeric complex with SMAD4 and translocation to the nucleus. Interacts (via the linker region) with EP300 (C-terminal); the interaction promotes SMAD3 acetylation and is enhanced by TGF-beta phosphorylation in the C-terminal of SMAD3. This interaction can be blocked by competitive binding of adenovirus oncoprotein E1A to the same C-terminal site on EP300, which then results in partially inhibited SMAD3/SMAD4 transcriptional activity. Interacts with TGFBR1. Interacts with TGFB1I1. Interacts with PRDM16. Interacts with SNW1. Interacts (via MH2 domain) with ZFYVE9. Interacts with HDAC1. Interacts with TGIF2. Interacts with SKOR1. Interacts with SKOR2. Interacts with DACH1; the interaction inhibits the TGF-beta signaling. Interacts with RBPMS. Interacts (via MH2 domain) with MECOM. Interacts with WWTR1 (via its coiled-coil domain). Interacts with SKI; the interaction represses SMAD3 transcriptional activity. Interacts with MEN1. Interacts with IL1F7. Interaction with CSNK1G2. Interacts with PDPK1 (via PH domain). Interacts with DAB2; the interactions are enhanced upon TGF-beta stimulation. Interacts with USP15. Interacts with PPP5C; the interaction decreases SMAD3 phosphorylation and protein levels. Interacts with LDLRAD4 (via the SMAD interaction motif). Interacts with PMEPA1. Interacts with ZNF451. Interacts with ZFHX3. Interacts weakly with ZNF8. Interacts with STUB1, HSPA1A, HSPA1B, HSP90AA1 and HSP90AB1. Interacts with YAP1 (when phosphorylated at 'Ser-55'). Interacts with MAGI2/ARIP1. Interacts (via MH2 domain) with CITED2 (via C-terminus). Interacts with HGS. Interacts with WWP1. Interacts with TTRAP. Interacts with FOXL2. Interacts with PML. Interacts with NEDD4L; the interaction requires TGF-beta stimulation. Interacts with ZC3H3. Interacts with TGIF. Interacts with CREBBP. Interacts with ATF2. Interacts with NEDD9; the interaction is inhibited by oxidation of NEDD9. Interacts with MTMR4; negatively regulates TGF-beta signaling through SMAD3 dephosphorylation and retention in endosomes. In terms of processing, phosphorylated on serine and threonine residues. Enhanced phosphorylation in the linker region on Thr-179, Ser-204 and Ser-208 on EGF and TGF-beta treatment. Ser-208 is the main site of MAPK-mediated phosphorylation. CDK-mediated phosphorylation occurs in a cell-cycle dependent manner and inhibits both the transcriptional activity and antiproliferative functions of SMAD3. This phosphorylation is inhibited by flavopiridol. Maximum phosphorylation at the G(1)/S junction. Also phosphorylated on serine residues in the C-terminal SXS motif by TGFBR1 and ACVR1. TGFBR1-mediated phosphorylation at these C-terminal sites is required for interaction with SMAD4, nuclear location and transactivational activity, and appears to be a prerequisite for the TGF-beta mediated phosphorylation in the linker region. Dephosphorylated in the C-terminal SXS motif by PPM1A. This dephosphorylation disrupts the interaction with SMAD4, promotes nuclear export and terminates TGF-beta-mediated signaling. Phosphorylation at Ser-418 by CSNK1G2/CK1 promotes ligand-dependent ubiquitination and subsequent proteasome degradation, thus inhibiting SMAD3-mediated TGF-beta responses. Phosphorylated by PDPK1. Post-translationally, acetylation in the nucleus by EP300 in the MH2 domain regulates positively its transcriptional activity and is enhanced by TGF-beta. Poly-ADP-ribosylated by PARP1 and PARP2. ADP-ribosylation negatively regulates SMAD3 transcriptional responses during the course of TGF-beta signaling. In terms of processing, ubiquitinated. Monoubiquitinated, leading to prevent DNA-binding. Deubiquitination by USP15 alleviates inhibition and promotes activation of TGF-beta target genes. Ubiquitinated by RNF111, leading to its degradation: only SMAD3 proteins that are 'in use' are targeted by RNF111, RNF111 playing a key role in activating SMAD3 and regulating its turnover. Undergoes STUB1-mediated ubiquitination and degradation. As to expression, highly expressed in the brain and ovary. Detected in the pyramidal cells of the hippocampus, granule cells of the dentate gyrus, granular cells of the cerebral cortex and the granulosa cells of the ovary.

It is found in the cytoplasm. The protein resides in the nucleus. In terms of biological role, receptor-regulated SMAD (R-SMAD) that is an intracellular signal transducer and transcriptional modulator activated by TGF-beta (transforming growth factor) and activin type 1 receptor kinases. Binds the TRE element in the promoter region of many genes that are regulated by TGF-beta and, on formation of the SMAD3/SMAD4 complex, activates transcription. Also can form a SMAD3/SMAD4/JUN/FOS complex at the AP-1/SMAD site to regulate TGF-beta-mediated transcription. Has an inhibitory effect on wound healing probably by modulating both growth and migration of primary keratinocytes and by altering the TGF-mediated chemotaxis of monocytes. This effect on wound healing appears to be hormone-sensitive. Regulator of chondrogenesis and osteogenesis and inhibits early healing of bone fractures. Positively regulates PDPK1 kinase activity by stimulating its dissociation from the 14-3-3 protein YWHAQ which acts as a negative regulator. In Sus scrofa (Pig), this protein is Mothers against decapentaplegic homolog 3 (SMAD3).